Reading from the N-terminus, the 207-residue chain is Large ribosomal subunit protein uL4 (207 aa).

Positions 49 to 79 (HKVKSRGEVSGGGKKPWRQKGTGRARAGTSR) are disordered.

It belongs to the universal ribosomal protein uL4 family. Part of the 50S ribosomal subunit.

One of the primary rRNA binding proteins, this protein initially binds near the 5'-end of the 23S rRNA. It is important during the early stages of 50S assembly. It makes multiple contacts with different domains of the 23S rRNA in the assembled 50S subunit and ribosome. Its function is as follows. Forms part of the polypeptide exit tunnel. This is Large ribosomal subunit protein uL4 from Heliobacterium modesticaldum (strain ATCC 51547 / Ice1).